We begin with the raw amino-acid sequence, 295 residues long: Tyrosine recombinase XerD (295 aa).

A Core-binding (CB) domain is found at 1 to 85 (MDTIIEEYLK…TIRSFHQFAL (85 aa)). The Tyr recombinase domain occupies 106-289 (KLPDVLEINE…SKSQIRKMYN (184 aa)). Residues Arg-146, Lys-170, His-241, Arg-244, and His-267 contribute to the active site. Tyr-276 (O-(3'-phospho-DNA)-tyrosine intermediate) is an active-site residue.

This sequence belongs to the 'phage' integrase family. XerD subfamily. Forms a cyclic heterotetrameric complex composed of two molecules of XerC and two molecules of XerD.

Its subcellular location is the cytoplasm. Functionally, site-specific tyrosine recombinase, which acts by catalyzing the cutting and rejoining of the recombining DNA molecules. The XerC-XerD complex is essential to convert dimers of the bacterial chromosome into monomers to permit their segregation at cell division. It also contributes to the segregational stability of plasmids. This is Tyrosine recombinase XerD from Staphylococcus saprophyticus subsp. saprophyticus (strain ATCC 15305 / DSM 20229 / NCIMB 8711 / NCTC 7292 / S-41).